The primary structure comprises 260 residues: D-threitol dehydrogenase (260 aa).

21–50 (LVTGAASGIGAAIASAYATKGARIAAVDLN) is a binding site for NAD(+). The active-site Proton acceptor is the Y166. K170 lines the NAD(+) pocket.

This sequence belongs to the short-chain dehydrogenases/reductases (SDR) family.

The enzyme catalyses D-threitol + NAD(+) = D-erythrulose + NADH + H(+). The protein operates within carbohydrate metabolism; D-threitol degradation. Its function is as follows. Catalyzes the NAD-dependent reversible oxidation of D-threitol. Involved in the degradation pathway of D-threitol, that allows M.smegmatis to grow on this compound as the sole carbon source. Does not catalyze the oxidation of xylitol, L-sorbitol, and L-sorbose. The chain is D-threitol dehydrogenase from Mycolicibacterium smegmatis (strain ATCC 700084 / mc(2)155) (Mycobacterium smegmatis).